Reading from the N-terminus, the 341-residue chain is tRNA N6-adenosine threonylcarbamoyltransferase (341 aa).

Residues His111 and His115 each coordinate Fe cation. Substrate-binding positions include 134–138 (LVSGG), Asp167, Gly180, and Asn276. Asp304 contacts Fe cation.

Belongs to the KAE1 / TsaD family. It depends on Fe(2+) as a cofactor.

The protein localises to the cytoplasm. It catalyses the reaction L-threonylcarbamoyladenylate + adenosine(37) in tRNA = N(6)-L-threonylcarbamoyladenosine(37) in tRNA + AMP + H(+). Its function is as follows. Required for the formation of a threonylcarbamoyl group on adenosine at position 37 (t(6)A37) in tRNAs that read codons beginning with adenine. Is involved in the transfer of the threonylcarbamoyl moiety of threonylcarbamoyl-AMP (TC-AMP) to the N6 group of A37, together with TsaE and TsaB. TsaD likely plays a direct catalytic role in this reaction. The sequence is that of tRNA N6-adenosine threonylcarbamoyltransferase from Pseudomonas syringae pv. tomato (strain ATCC BAA-871 / DC3000).